A 460-amino-acid chain; its full sequence is A-type ATP synthase subunit B 1 (460 aa).

The protein belongs to the ATPase alpha/beta chains family. Has multiple subunits with at least A(3), B(3), C, D, E, F, H, I and proteolipid K(x).

It localises to the cell membrane. Component of the A-type ATP synthase that produces ATP from ADP in the presence of a proton gradient across the membrane. The B chain is a regulatory subunit. This Methanospirillum hungatei JF-1 (strain ATCC 27890 / DSM 864 / NBRC 100397 / JF-1) protein is A-type ATP synthase subunit B 1.